The primary structure comprises 196 residues: SPRY domain-containing protein 7 (196 aa).

The B30.2/SPRY domain maps to 1-184; the sequence is MAASVFCCLR…FSEFYHTPPP (184 aa).

The chain is SPRY domain-containing protein 7 (SPRYD7) from Gallus gallus (Chicken).